The following is an 88-amino-acid chain: MANSKSAKKRALQSEKRRQHNASRRSMLRSYVKKVIAAIQAGDHAAATEAFNAAQPILDRMATKGLIHKNKAARHKARLNTRIKALAA.

Residues 1–27 form a disordered region; it reads MANSKSAKKRALQSEKRRQHNASRRSM.

This sequence belongs to the bacterial ribosomal protein bS20 family.

Functionally, binds directly to 16S ribosomal RNA. This chain is Small ribosomal subunit protein bS20, found in Shewanella woodyi (strain ATCC 51908 / MS32).